A 63-amino-acid polypeptide reads, in one-letter code: Cecropin-A (63 aa).

Residues 1–22 form the signal peptide; the sequence is MNFVRILSFVFALVLALGAVSA. Residues 23 to 26 constitute a propeptide that is removed on maturation; it reads APEP. Leu61 carries the post-translational modification Leucine amide.

This sequence belongs to the cecropin family. Highest expression in fat body and hemocytes. Is also expressed in Malpighian tubules and to a much lesser extent in midgut. Not present in silk gland.

It is found in the secreted. Its function is as follows. Cecropins have lytic and antibacterial activity against several Gram-positive and Gram-negative bacteria. This is Cecropin-A (CECA) from Bombyx mori (Silk moth).